A 4540-amino-acid polypeptide reads, in one-letter code: Dynein heavy chain, cytoplasmic (4540 aa).

Residues 1–1796 (MEESETQLNV…LIQMGNAQFH (1796 aa)) are stem. Coiled coils occupy residues 440 to 482 (EHIK…NVQQ), 698 to 722 (RVNY…KTKV), 794 to 827 (VKKF…AMKT), 975 to 995 (QQLI…MEQY), 1169 to 1251 (RSKK…LKMD), and 1295 to 1311 (QNKK…KQLN). 4 AAA regions span residues 1797–2018 (YGFE…VLNS), 2091–2348 (KELA…FTRI), 2457–2705 (EIDP…WKYA), and 2796–3056 (QFNE…AKRF). ATP-binding positions include 1835–1842 (GPAGTGKT), 2129–2136 (GPCGCGKS), 2496–2503 (GPPGSGKT), and 2834–2841 (GSSGVGKT). Coiled coils occupy residues 3076 to 3182 (NEKK…NAKQ), 3289 to 3367 (QLKY…RSQA), 3653 to 3688 (EDEK…VMNT), and 3820 to 3851 (QQLK…RWLN). Positions 3076–3367 (NEKKSQLEDQ…VQEKVTRSQA (292 aa)) are stalk. Residues 3140–3159 (KKKEDSTRLSSDAEKKAKEM) form a disordered region. Residues 3444–3673 (LSRPSDRLNW…LKKEAAVIVQ (230 aa)) are AAA 5. The segment at 3908–4123 (ARKLINQILG…QRCSLDLIDE (216 aa)) is AAA 6. 2 coiled-coil regions span residues 4238–4259 (QKLI…TQIE) and 4313–4342 (RFLD…LAQG).

It belongs to the dynein heavy chain family. In terms of assembly, consists of at least two heavy chains and a number of intermediate and light chains.

It is found in the cytoplasm. The protein resides in the cytoskeleton. Its function is as follows. Cytoplasmic dynein acts as a motor for the intracellular retrograde motility of vesicles and organelles along microtubules. Dynein has ATPase activity; the force-producing power stroke is thought to occur on release of ADP. In Paramecium tetraurelia, this protein is Dynein heavy chain, cytoplasmic (DHC-8).